We begin with the raw amino-acid sequence, 265 residues long: Gamma-secretase subunit APH-1A (265 aa).

At 1 to 2 (MG) the chain is on the lumenal side. The chain crosses the membrane as a helical span at residues 3–23 (AAVFFGCTFVAFGPAFALFLI). Over 24–31 (TVAGDPLR) the chain is Cytoplasmic. A helical membrane pass occupies residues 32 to 52 (VIILVAGAFFWLVSLLLASVV). At 53-68 (WFILVHVTDRSDARLQ) the chain is on the lumenal side. Residues 69–89 (YGLLIFGAAVSVLLQEVFRFA) form a helical membrane-spanning segment. Topologically, residues 90-118 (YYKLLKKADEGLASLSEDGRSPISIRQMA) are cytoplasmic. The helical transmembrane segment at 119–139 (YVSGLSFGIISGVFSVINILA) threads the bilayer. Topologically, residues 140-158 (DALGPGVVGIHGDSPYYFL) are lumenal. The chain crosses the membrane as a helical span at residues 159–179 (TSAFLTAAIILLHTFWGVVFF). At 180–186 (DACERRR) the chain is on the cytoplasmic side. Residues 187–207 (YWALGLVVGSHLLTSGLTFLN) form a helical membrane-spanning segment. Residues 208 to 213 (PWYEAS) are Lumenal-facing. Residues 214–234 (LLPIYAVTVSMGLWAFITAGG) traverse the membrane as a helical segment. Residues 235–265 (SLRSIQRSLLCRRQEDSRVMVYSALRIPPED) lie on the Cytoplasmic side of the membrane.

Belongs to the APH-1 family. As to quaternary structure, the functional gamma-secretase complex is composed of at least four polypeptides: a presenilin homodimer (PSEN1 or PSEN2), nicastrin (NCSTN), APH1 (APH1A or APH1B) and PSENEN/PEN2. Widely expressed. Expressed in leukocytes, lung, placenta, small intestine, liver, kidney, spleen thymus, skeletal muscle, heart and brain. Isoform 1 and isoform 2 are nearly expressed at the same level.

It localises to the endoplasmic reticulum membrane. It is found in the golgi apparatus. The protein resides in the golgi stack membrane. Non-catalytic subunit of the gamma-secretase complex, an endoprotease complex that catalyzes the intramembrane cleavage of integral membrane proteins such as Notch receptors and APP (amyloid-beta precursor protein). Required for normal gamma-secretase assembly. The gamma-secretase complex plays a role in Notch and Wnt signaling cascades and regulation of downstream processes via its role in processing key regulatory proteins, and by regulating cytosolic CTNNB1 levels. This Homo sapiens (Human) protein is Gamma-secretase subunit APH-1A (APH1A).